The sequence spans 332 residues: Abscisic acid-inducible protein kinase (332 aa).

ATP is bound by residues 1-8 (GSGNFGVA) and Lys23. A Protein kinase domain is found at 1–250 (GSGNFGVAKL…IPEIKNHPWF (250 aa)). Asp113 (proton acceptor) is an active-site residue.

This sequence belongs to the protein kinase superfamily. Ser/Thr protein kinase family. Autophosphorylated.

The enzyme catalyses L-seryl-[protein] + ATP = O-phospho-L-seryl-[protein] + ADP + H(+). It catalyses the reaction L-threonyl-[protein] + ATP = O-phospho-L-threonyl-[protein] + ADP + H(+). Involved in water-stress responses. The chain is Abscisic acid-inducible protein kinase from Triticum aestivum (Wheat).